Consider the following 440-residue polypeptide: Chromosome partition protein MukF (440 aa).

The interval 208 to 236 (LSETSGTLRELQDTLEAAGDKLQANLLRI) is leucine-zipper.

The protein belongs to the MukF family. Interacts, and probably forms a ternary complex, with MukE and MukB via its C-terminal region. The complex formation is stimulated by calcium or magnesium. It is required for an interaction between MukE and MukB.

It is found in the cytoplasm. The protein resides in the nucleoid. Its function is as follows. Involved in chromosome condensation, segregation and cell cycle progression. May participate in facilitating chromosome segregation by condensation DNA from both sides of a centrally located replisome during cell division. Not required for mini-F plasmid partitioning. Probably acts via its interaction with MukB and MukE. Overexpression results in anucleate cells. It has a calcium binding activity. This is Chromosome partition protein MukF from Escherichia coli (strain UTI89 / UPEC).